The sequence spans 504 residues: ATP synthase subunit alpha (504 aa).

Glycine 170–threonine 177 is an ATP binding site.

Belongs to the ATPase alpha/beta chains family. In terms of assembly, F-type ATPases have 2 components, CF(1) - the catalytic core - and CF(0) - the membrane proton channel. CF(1) has five subunits: alpha(3), beta(3), gamma(1), delta(1), epsilon(1). CF(0) has four main subunits: a(1), b(1), b'(1) and c(9-12).

It is found in the cellular thylakoid membrane. The enzyme catalyses ATP + H2O + 4 H(+)(in) = ADP + phosphate + 5 H(+)(out). Functionally, produces ATP from ADP in the presence of a proton gradient across the membrane. The alpha chain is a regulatory subunit. The sequence is that of ATP synthase subunit alpha from Prochlorococcus marinus (strain NATL1A).